The primary structure comprises 428 residues: MRRDYIDIGYSPKETDLVCEFHIEPTAGVNFEEAATHLAGESSIDSWTEIATLSPELAEKLKPHVFYADEGAQTVRVAYSEELFELGSVPQVLSAVAGNILSMKIVDNVRLQDIAFPKSMINEFKGPNFGLPGIRKLVGVQDRPLIGTIVKPKVGLNSEKHAEVAYNSFVGGCDLVKDDENLSDQKFNSFEKRAELTLKLAEKAESETGEKKMYLCNVTAPTCREMIRRMNFLKDLGASYVMVDIVPAGWTAIQTLREEAEDAGLALHAHRCMHSAYTRNPRHGISMLVVAKLCRLIGLDQLHIGTVVGKMHGEKHEVLNLRDQCVLDKVPADESQHILAQDWRGLKPMFPVASGGLAPTMIPDLYSIFGKDVIMQFGGGIHAHPMGTVAGATACRQALEASLEGISLQDYAKNHKELETALGKWLKK.

K151 serves as the catalytic Proton acceptor. Residue K153 coordinates substrate. Mg(2+) is bound by residues K177, D179, and E180. An N6-carboxylysine modification is found at K177. H270 acts as the Proton acceptor in catalysis. Substrate-binding positions include R271, H303, 354–356, and 376–379; these read SGG and QFGG.

Belongs to the RuBisCO large chain family. Type III subfamily. Homodimer or homodecamer. In contrast to form I RuBisCO, the form III RuBisCO is composed solely of large subunits. Requires Mg(2+) as cofactor.

The catalysed reaction is 2 (2R)-3-phosphoglycerate + 2 H(+) = D-ribulose 1,5-bisphosphate + CO2 + H2O. It carries out the reaction D-ribulose 1,5-bisphosphate + O2 = 2-phosphoglycolate + (2R)-3-phosphoglycerate + 2 H(+). Functionally, catalyzes the addition of molecular CO(2) and H(2)O to ribulose 1,5-bisphosphate (RuBP), generating two molecules of 3-phosphoglycerate (3-PGA). Functions in an archaeal AMP degradation pathway, together with AMP phosphorylase and R15P isomerase. This Methanosarcina mazei (strain ATCC BAA-159 / DSM 3647 / Goe1 / Go1 / JCM 11833 / OCM 88) (Methanosarcina frisia) protein is Ribulose bisphosphate carboxylase.